The following is a 148-amino-acid chain: UPF0134 protein MPN_204 (148 aa).

Belongs to the UPF0134 family.

In Mycoplasma pneumoniae (strain ATCC 29342 / M129 / Subtype 1) (Mycoplasmoides pneumoniae), this protein is UPF0134 protein MPN_204.